The chain runs to 86 residues: U15-lycotoxin-Ls1c (86 aa).

The N-terminal stretch at 1-20 (MNSKIFAVLLLLAFLSCVLS) is a signal peptide. A WAP domain is found at 21–66 (DQYCPKSSITACKKMNIRNDCCKDDDCTGGSWCCATPCGNICKYPT). Intrachain disulfides connect Cys24–Cys54, Cys32–Cys58, Cys41–Cys53, Cys42–Cys80, and Cys47–Cys62.

This sequence belongs to the venom protein 11 family. 01 (wap-1) subfamily. In terms of processing, contains 5 disulfide bonds. As to expression, expressed by the venom gland.

It localises to the secreted. Has antibacterial activity. The polypeptide is U15-lycotoxin-Ls1c (Lycosa singoriensis (Wolf spider)).